Reading from the N-terminus, the 143-residue chain is Large ribosomal subunit protein uL11 (143 aa).

This sequence belongs to the universal ribosomal protein uL11 family. Part of the ribosomal stalk of the 50S ribosomal subunit. Interacts with L10 and the large rRNA to form the base of the stalk. L10 forms an elongated spine to which L12 dimers bind in a sequential fashion forming a multimeric L10(L12)X complex. In terms of processing, one or more lysine residues are methylated.

Its function is as follows. Forms part of the ribosomal stalk which helps the ribosome interact with GTP-bound translation factors. In Rhizobium rhizogenes (strain K84 / ATCC BAA-868) (Agrobacterium radiobacter), this protein is Large ribosomal subunit protein uL11.